Here is a 176-residue protein sequence, read N- to C-terminus: uncharacterized protein (176 aa).

This is an uncharacterized protein from Caenorhabditis elegans.